Here is a 245-residue protein sequence, read N- to C-terminus: tRNA pseudouridine synthase A 2 (245 aa).

Asp53 serves as the catalytic Nucleophile. Tyr111 is a binding site for substrate.

This sequence belongs to the tRNA pseudouridine synthase TruA family. In terms of assembly, homodimer.

The enzyme catalyses uridine(38/39/40) in tRNA = pseudouridine(38/39/40) in tRNA. In terms of biological role, formation of pseudouridine at positions 38, 39 and 40 in the anticodon stem and loop of transfer RNAs. This chain is tRNA pseudouridine synthase A 2, found in Bacillus anthracis.